Here is a 673-residue protein sequence, read N- to C-terminus: DNA mismatch repair protein MutL (673 aa).

It belongs to the DNA mismatch repair MutL/HexB family.

This protein is involved in the repair of mismatches in DNA. It is required for dam-dependent methyl-directed DNA mismatch repair. May act as a 'molecular matchmaker', a protein that promotes the formation of a stable complex between two or more DNA-binding proteins in an ATP-dependent manner without itself being part of a final effector complex. This chain is DNA mismatch repair protein MutL, found in Ehrlichia chaffeensis (strain ATCC CRL-10679 / Arkansas).